The primary structure comprises 235 residues: Leucyl/phenylalanyl-tRNA--protein transferase (235 aa).

It belongs to the L/F-transferase family.

It is found in the cytoplasm. The enzyme catalyses N-terminal L-lysyl-[protein] + L-leucyl-tRNA(Leu) = N-terminal L-leucyl-L-lysyl-[protein] + tRNA(Leu) + H(+). It carries out the reaction N-terminal L-arginyl-[protein] + L-leucyl-tRNA(Leu) = N-terminal L-leucyl-L-arginyl-[protein] + tRNA(Leu) + H(+). It catalyses the reaction L-phenylalanyl-tRNA(Phe) + an N-terminal L-alpha-aminoacyl-[protein] = an N-terminal L-phenylalanyl-L-alpha-aminoacyl-[protein] + tRNA(Phe). Functionally, functions in the N-end rule pathway of protein degradation where it conjugates Leu, Phe and, less efficiently, Met from aminoacyl-tRNAs to the N-termini of proteins containing an N-terminal arginine or lysine. The protein is Leucyl/phenylalanyl-tRNA--protein transferase of Shewanella frigidimarina (strain NCIMB 400).